A 490-amino-acid polypeptide reads, in one-letter code: Glutathione reductase (490 aa).

2 residues coordinate FAD: Ser19 and Gly20. Glutathione is bound at residue Ser19. Position 26 (Arg26) interacts with glutathione. 4 residues coordinate FAD: Glu39, Thr48, Cys49, and Lys57. Cys49 and Cys54 form a disulfide bridge. Tyr110 contacts glutathione. Ala126 provides a ligand contact to FAD. Ala208, Ile211, Glu214, Arg231, and Arg237 together coordinate NADP(+). Ser246 contacts glutathione. Residue Gly297 coordinates NADP(+). Asp337 lines the FAD pocket. Glu343 provides a ligand contact to NADP(+). Residue Thr345 participates in FAD binding. Arg353 is a glutathione binding site. Val379 provides a ligand contact to NADP(+). Lys432 provides a ligand contact to glutathione. His479 contributes to the FAD binding site. His479 (proton acceptor) is an active-site residue.

Belongs to the class-I pyridine nucleotide-disulfide oxidoreductase family. As to quaternary structure, homodimer. Requires FAD as cofactor.

The protein localises to the cytoplasm. It is found in the mitochondrion. It carries out the reaction 2 glutathione + NADP(+) = glutathione disulfide + NADPH + H(+). Its function is as follows. Catalyzes the reduction of glutathione disulfide (GSSG) to reduced glutathione (GSH). Constitutes the major mechanism to maintain a high GSH:GSSG ratio in the cytosol. This is Glutathione reductase (GLR1) from Debaryomyces hansenii (strain ATCC 36239 / CBS 767 / BCRC 21394 / JCM 1990 / NBRC 0083 / IGC 2968) (Yeast).